We begin with the raw amino-acid sequence, 1098 residues long: Early transcription factor large subunit homolog (1098 aa).

One can recognise a Helicase ATP-binding domain in the interval 17–317 (KGGRAFFPCD…PNGQPLQRQQ (301 aa)). Residue 64–71 (WQTGTGKS) coordinates ATP. A DEAH box motif is present at residues 246-249 (DEIH). The 201-residue stretch at 489–689 (MMKDILSIIR…EGDKALRKHA (201 aa)) folds into the Helicase C-terminal domain.

Belongs to the DEAD box helicase family. DEAH subfamily.

The protein localises to the virion. The catalysed reaction is ATP + H2O = ADP + phosphate + H(+). Functionally, putative initation factor. The protein is Early transcription factor large subunit homolog of African swine fever virus (isolate Tick/Malawi/Lil 20-1/1983) (ASFV).